Here is a 1374-residue protein sequence, read N- to C-terminus: MSLERELRQLSKAKTKAQRSGQLREEASVCHQLGELLASHGCYAEALREHQQELQLLETTDDPLGCAVAHRKIGERLAEMEDYSAALQHQHRYLELACALSNHVEQQRAWATIGRTHLDIYDHHQSQDALQQAQDAFEKSLAILDEKLQGSLPKRELSEMRTRIYLNLGLTCESLQQVALCSAYFKKSIFLAEQNHLYEDLFRARYNLGAIHWRRGQHSQAMRCLEGARECARVLKQAFLESECCLLLSQVLLDLGDFLAAKRALKKAYRLGSQKPLQKASVCRTLKYVLAVVQLQQRLEESEESDPEVAMGICEQLGDLFSKAGDFPKAAAAYQKQLRFAELLSRPGPELAVIHVSLAATLGDMKDHRQAVHHYEAELKLQEGNPLEEAKTWLNIALSREEAGDAYEVLALCFQKALGCAQLAGQPQLQRQILQHLHAVQLRLQPQEAPSTETRLQELKAAGDEDEGDGEDEEDEEDDDALEATELELSESENEADASPPLEEDEELRGCLGRQRVNKWSRRNDVGETLLHRACIEGQLGRVQDLVRQGHPLNPRDYCGWTPLHEACNYGHLDIVRFLLDHGAAVDDPGGQGCDGITPLHDALNCGHFEVAELLIERGASVTLRTRKGHNPLETLQQWVKLYGKDLDSETQEKAAAMGRLLQAASLGRAPHSSQAPQTLPSNHLFDPETSPPSSPCPGTPEVCEASTRVSQGLAVSTVARPRRSRHKVASSSSSEGEDSAGPSQPTQKRPRHASPSLQTKAPMPGPASDREAATTSTSWAAYREAIRGVGSAQTCRLGPSPLRGPSEIPIPQAALIPQEECLAGDWLEEDFPMSPGHRGRCPARPQSSGDGGRHRASGPGSDTARRPRAQARQSRLPYLESWSTPVRADRANSQATEPARSPDVPRVVAPTGENPTTGHLPGQVLPPPIRVRVRVQDNLFLIPVPHREAHSVAWLAEQAAQRHYQASGLLPRLSLQKEGALLAPQDPIPDVLQSNEEVLAEVTSWDLPPLRDRYRRACQTLEQGEHQQVLQAVEHQGSAPTFSACSLALRQAQLTPLLRALKLHSALRELRLAGNRLGDGCVAELLATLDTVPGLTLLDLSSNHLGPEGLRQLAAGLLGQTTLQNLEELDLSMNPLGDGCGQALASILRACPVLCTLHLQACGFGPGFFLSHQVALGSAFQDTKCLKTLSLSYNGLGPTALGPVLGSLPAHSLLRLELSSVVTGKSDVGLTDPVVHYLSQEGCVLEHLSLSANHLGDKDVRALSRCLPLCPSLVSLDLSANPEVSSAGLEELLSTLQKRPQGLSFLGLSGCAVQGPLGLDLWDKVVAQLQELQLCTRRLSAEDRNALHQLLPSQLGPKVCTLDQGPKLFFRHL.

8 TPR repeats span residues 27-60 (ASVCHQLGELLASHGCYAEALREHQQELQLLETT), 67-100 (AVAHRKIGERLAEMEDYSAALQHQHRYLELACAL), 107-140 (QRAWATIGRTHLDIYDHHQSQDALQQAQDAFEKS), 162-195 (TRIYLNLGLTCESLQQVALCSAYFKKSIFLAEQN), 202-235 (FRARYNLGAIHWRRGQHSQAMRCLEGARECARVL), 242-275 (SECCLLLSQVLLDLGDFLAAKRALKKAYRLGSQK), 311-344 (MGICEQLGDLFSKAGDFPKAAAAYQKQLRFAELL), and 352-385 (AVIHVSLAATLGDMKDHRQAVHHYEAELKLQEGN). Residues 460-508 (KAAGDEDEGDGEDEEDEEDDDALEATELELSESENEADASPPLEEDEEL) are disordered. Acidic residues predominate over residues 464–507 (DEDEGDGEDEEDEEDDDALEATELELSESENEADASPPLEEDEE). 3 ANK repeats span residues 526 to 558 (VGETLLHRACIEGQLGRVQDLVRQGHPLNPRDY), 559 to 591 (CGWTPLHEACNYGHLDIVRFLLDHGAAVDDPGG), and 595 to 627 (DGITPLHDALNCGHFEVAELLIERGASVTLRTR). The segment at 668–777 (GRAPHSSQAP…ASDREAATTS (110 aa)) is disordered. Positions 672-682 (HSSQAPQTLPS) are enriched in polar residues. Positions 690-699 (TSPPSSPCPG) are enriched in pro residues. Position 711 is a phosphoserine (S711). Low complexity predominate over residues 731–744 (SSSSSEGEDSAGPS). At R788 the chain carries Omega-N-methylarginine. The disordered stretch occupies residues 829–908 (EEDFPMSPGH…PARSPDVPRV (80 aa)). LRR repeat units lie at residues 1065 to 1089 (HSALRELRLAGNRLGDGCVAELLAT), 1093 to 1121 (VPGLTLLDLSSNHLGPEGLRQLAAGLLGQ), 1124 to 1147 (LQNLEELDLSMNPLGDGCGQALAS), 1184 to 1207 (TKCLKTLSLSYNGLGPTALGPVLG), 1243 to 1266 (GCVLEHLSLSANHLGDKDVRALSR), 1271 to 1296 (CPSLVSLDLSANPEVSSAGLEELLST), and 1327 to 1350 (VAQLQELQLCTRRLSAEDRNALHQ).

Belongs to the Tonsoku family. In terms of assembly, component of the MMS22L-TONSL complex, a complex at least composed of MMS22L and TONSL/NFKBIL2. Interacts with the MCM complex, the FACT complex and the RPA complex. Interacts with MCM5; the interaction is direct. Binds histones, with a strong preference for histone H3.1 (histones H3.1 and H3-4/H3.1t). Interacts (via ANK repeats) with histone H4; specifically binds histone H4 lacking methylation at 'Lys-20' (H4K20me0). May interact with DNAJC9; the interaction seems to be histone-dependent.

It is found in the nucleus. The protein resides in the chromosome. Its subcellular location is the cytoplasm. Its function is as follows. Component of the MMS22L-TONSL complex, a complex that promotes homologous recombination-mediated repair of double-strand breaks (DSBs) at stalled or collapsed replication forks. The MMS22L-TONSL complex is required to maintain genome integrity during DNA replication. It mediates the assembly of RAD51 filaments on single-stranded DNA (ssDNA): the MMS22L-TONSL complex is recruited to DSBs following histone replacement by histone chaperones and eviction of the replication protein A complex (RPA/RP-A) from DSBs. Following recruitment to DSBs, the TONSL-MMS22L complex promotes recruitment of RAD51 filaments and subsequent homologous recombination. Within the complex, TONSL acts as a histone reader, which recognizes and binds newly synthesized histones following their replacement by histone chaperones. Specifically binds histone H4 lacking methylation at 'Lys-20' (H4K20me0) and histone H3.1. The protein is Tonsoku-like protein (TONSL) of Bos taurus (Bovine).